The chain runs to 352 residues: Sodium-lithium/proton antiporter (352 aa).

The next 8 helical transmembrane spans lie at 11–31 (ILLL…PVSV), 32–52 (PLII…WMQF), 61–81 (AVTI…TYAV), 159–179 (IPEY…FMLE), 216–236 (AQFL…FWIT), 241–261 (IVMS…SIVI), 271–291 (IVGD…LLAI), and 317–337 (IGLQ…VIAF).

The protein belongs to the autoinducer-2 exporter (AI-2E) (TC 2.A.86) family.

The protein resides in the cell membrane. Catalyzes the pH-dependent efflux of sodium and lithium in exchange for external protons. The protein is Sodium-lithium/proton antiporter of Halobacillus andaensis.